Consider the following 486-residue polypeptide: PTS system N-acetylmuramic acid-specific EIIBC component (486 aa).

The PTS EIIB type-1 domain occupies 1–89 (MAKITQTMIS…NKLIESVING (89 aa)). The active-site Phosphocysteine intermediate; for EIIB activity is the Cys-28. A PTS EIIC type-1 domain is found at 127-486 (SKFATIFTPL…FFGSKDVDLS (360 aa)). 10 helical membrane-spanning segments follow: residues 129 to 149 (FATI…LLGF), 170 to 190 (LIAY…ILIG), 196 to 216 (AFGG…LGYN), 230 to 250 (FFGY…AAII), 268 to 288 (MILT…VVIM), 312 to 332 (AAIL…QGFV), 347 to 367 (LFPI…ALYF), 381 to 401 (GAII…VTLP), 411 to 431 (IGGA…LPVG), and 453 to 473 (IFAG…VGFL).

It is found in the cell inner membrane. The catalysed reaction is N-acetyl-beta-D-muramate(out) + N(pros)-phospho-L-histidyl-[protein] = N-acetyl-beta-D-muramate 6-phosphate(in) + L-histidyl-[protein]. Its function is as follows. The phosphoenolpyruvate-dependent sugar phosphotransferase system (sugar PTS), a major carbohydrate active transport system, catalyzes the phosphorylation of incoming sugar substrates concomitantly with their translocation across the cell membrane. This system is involved in N-acetylmuramic acid (MurNAc) transport, yielding cytoplasmic MurNAc-6-P. Is also able to take up anhydro-N-acetylmuramic acid (anhMurNAc), but cannot phosphorylate the carbon 6, probably because of the 1,6-anhydro ring. The chain is PTS system N-acetylmuramic acid-specific EIIBC component (murP) from Vibrio vulnificus (strain CMCP6).